A 270-amino-acid chain; its full sequence is Ribosomal RNA small subunit methyltransferase A (270 aa).

S-adenosyl-L-methionine-binding residues include His-11, Leu-13, Gly-38, Glu-59, Asp-84, and Asn-109.

This sequence belongs to the class I-like SAM-binding methyltransferase superfamily. rRNA adenine N(6)-methyltransferase family. RsmA subfamily.

It localises to the cytoplasm. It carries out the reaction adenosine(1518)/adenosine(1519) in 16S rRNA + 4 S-adenosyl-L-methionine = N(6)-dimethyladenosine(1518)/N(6)-dimethyladenosine(1519) in 16S rRNA + 4 S-adenosyl-L-homocysteine + 4 H(+). Its function is as follows. Specifically dimethylates two adjacent adenosines (A1518 and A1519) in the loop of a conserved hairpin near the 3'-end of 16S rRNA in the 30S particle. May play a critical role in biogenesis of 30S subunits. The chain is Ribosomal RNA small subunit methyltransferase A from Crocosphaera subtropica (strain ATCC 51142 / BH68) (Cyanothece sp. (strain ATCC 51142)).